Consider the following 245-residue polypeptide: Eukaryotic translation initiation factor 3 subunit K (245 aa).

The PCI domain maps to Tyr-46 to Asn-227.

The protein belongs to the eIF-3 subunit K family. As to quaternary structure, component of the eukaryotic translation initiation factor 3 (eIF-3) complex.

It is found in the cytoplasm. In terms of biological role, component of the eukaryotic translation initiation factor 3 (eIF-3) complex, which is involved in protein synthesis of a specialized repertoire of mRNAs and, together with other initiation factors, stimulates binding of mRNA and methionyl-tRNAi to the 40S ribosome. The eIF-3 complex specifically targets and initiates translation of a subset of mRNAs involved in cell proliferation. This chain is Eukaryotic translation initiation factor 3 subunit K, found in Sclerotinia sclerotiorum (strain ATCC 18683 / 1980 / Ss-1) (White mold).